Here is a 469-residue protein sequence, read N- to C-terminus: MRGLIDPDLLFPAEERTRALARRLYAEVSGLPIVSPHGHTEPRWYALDEAFPDPAQLLIVPDHYVFRMLFSQGIRLEELGVPALDGSPVETDGRAIWRRFCENYHLFRGTPTRLWFDYTLSELFGIDELPSAASSDPLYDHVAECLTRPDYRPRALYERFNIEVISTTDSALDDLGWHAKILESGWKGRVVPAYRPDAVVDPDFQGFPTNLDKLGDITGADTGTWSGYLDAHRTRRAYFKDFGATSTDHGHATADTANLPQAEAAALFDKVRLGKANADERRLFRAQMLTEMAKMSLDDGLVMQIHPGSFRNHSPAILAKFGRDKGFDIPTRTDYVTALKPLLDAVGLERDLTVILFTLDETSYARELAPLAGVYPALKLGPAWWFHDSAEGMRRFREMTTETAGFYNTVGFNDDTRAFPSIPARHDIARRVDCAFLARLVAEHRLREDEAYELARDLAYGLAKEAYRL.

The protein belongs to the metallo-dependent hydrolases superfamily. Uronate isomerase family.

The enzyme catalyses D-glucuronate = D-fructuronate. The catalysed reaction is aldehydo-D-galacturonate = keto-D-tagaturonate. It participates in carbohydrate metabolism; pentose and glucuronate interconversion. In Rhizobium meliloti (strain 1021) (Ensifer meliloti), this protein is Uronate isomerase.